Reading from the N-terminus, the 422-residue chain is Large ribosomal subunit protein uL4 (422 aa).

The residue at position 2 (alanine 2) is an N-acetylalanine. Lysine 14 bears the N6-acetyllysine mark. Arginine 97 carries the post-translational modification Omega-N-methylarginine. At lysine 106 the chain carries N6-acetyllysine. Residue lysine 239 forms a Glycyl lysine isopeptide (Lys-Gly) (interchain with G-Cter in SUMO2) linkage. Residue lysine 259 is modified to N6-acetyllysine. Phosphothreonine is present on threonine 266. 2 positions are modified to phosphoserine: serine 290 and serine 295. At arginine 300 the chain carries Citrulline. Lysine 327 participates in a covalent cross-link: Glycyl lysine isopeptide (Lys-Gly) (interchain with G-Cter in SUMO2). Lysine 333 and lysine 353 each carry N6-acetyllysine. Positions 359 to 422 are disordered; the sequence is EAKSDQKGVQ…PTSEEKKAAA (64 aa). Lysine 361 carries the N6-acetyllysine; alternate modification. Lysine 361 is covalently cross-linked (Glycyl lysine isopeptide (Lys-Gly) (interchain with G-Cter in SUMO1); alternate). The residue at position 362 (serine 362) is a Phosphoserine. 2 stretches are compositionally biased toward basic and acidic residues: residues 376 to 385 and 402 to 422; these read NKEKKAVGDK and PAAE…KAAA.

The protein belongs to the universal ribosomal protein uL4 family. As to quaternary structure, component of the large ribosomal subunit. May bind IPO9 with low affinity. Interacts with RBM3. In terms of processing, citrullinated by PADI4.

It is found in the cytoplasm. Component of the large ribosomal subunit. The ribosome is a large ribonucleoprotein complex responsible for the synthesis of proteins in the cell. In Bos taurus (Bovine), this protein is Large ribosomal subunit protein uL4 (RPL4).